A 321-amino-acid polypeptide reads, in one-letter code: Olfactory receptor 14J1 (321 aa).

Residues 1 to 23 lie on the Extracellular side of the membrane; the sequence is MVNLTSMSGFLLMGFSDERKLQI. Residue N3 is glycosylated (N-linked (GlcNAc...) asparagine). The helical transmembrane segment at 24–44 threads the bilayer; that stretch reads LHALVFLVTYLLALTGNLLII. Topologically, residues 45–52 are cytoplasmic; that stretch reads TIITVDRR. A helical membrane pass occupies residues 53–73; the sequence is LHSPMYYFLKHLSLLDLCFIS. Topologically, residues 74 to 97 are extracellular; it reads VTVPQSIANSLMGNGYISLVQCIL. C95 and C187 are oxidised to a cystine. The helical transmembrane segment at 98-118 threads the bilayer; it reads QVFFFIALASSEVAILTVMSY. Residues 119–137 are Cytoplasmic-facing; that stretch reads DRYAAICQPLHYETIMDPR. Residues 138–158 traverse the membrane as a helical segment; sequence ACRHAVIAVWIAGGLSGLMHA. The Extracellular segment spans residues 159-194; it reads AINFSIPLCGKRVIHQFFCDVPQMLKLACSYEFINE. Residues 195 to 215 traverse the membrane as a helical segment; sequence IALAAFTTSAAFICLISIVLS. The Cytoplasmic segment spans residues 216–235; it reads YIRIFSTVLRIPSAEGRTKV. The chain crosses the membrane as a helical span at residues 236–256; the sequence is FSTCLPHLFVATFFLSAAGFE. At 257–269 the chain is on the extracellular side; it reads FLRLPSDSSSTVD. The chain crosses the membrane as a helical span at residues 270–290; the sequence is LVFSVFYTVIPPTLNPVIYSL. Residues 291–321 are Cytoplasmic-facing; that stretch reads RNDSMKAALRKMLSKEELPQRKMCLKAMFKL.

Belongs to the G-protein coupled receptor 1 family.

Its subcellular location is the cell membrane. Odorant receptor. In Homo sapiens (Human), this protein is Olfactory receptor 14J1 (OR14J1).